A 628-amino-acid polypeptide reads, in one-letter code: Forkhead box protein O (628 aa).

Disordered regions lie at residues 39–77, 182–205, 217–269, 316–359, and 389–415; these read RARS…DSQQ, KSVR…RAKK, GLND…RLSP, QQQG…APGY, and NSVT…YSNV. Threonine 44 is modified (phosphothreonine; by PKB/AKT1). A compositionally biased stretch (polar residues) spans 63-77; the sequence is TKASNQQLAPGDSQQ. Residue serine 75 is modified to Phosphoserine. The fork-head DNA-binding region spans 95–201; that stretch reads WGNLSYADLI…ETSRYEKRRG (107 aa). Serine 190 carries the post-translational modification Phosphoserine; by PKB/AKT1. Composition is skewed to polar residues over residues 221–230 and 256–265; these read ATPSPSSSVS and RASSNASSCG. Serine 259 carries the post-translational modification Phosphoserine; by PKB/AKT1. Phosphoserine occurs at positions 262, 263, and 268. The segment covering 328–337 has biased composition (pro residues); that stretch reads SQPPPPPYQP. The span at 338-351 shows a compositional bias: low complexity; the sequence is PQHQQAQQQQSPYA. The segment covering 402–414 has biased composition (polar residues); sequence SEPSSDSLNTYSN.

As to quaternary structure, interacts with melt.

The protein localises to the cytoplasm. It is found in the nucleus. Its function is as follows. Transcription factor involved in the regulation of the insulin signaling pathway. Consistently activates both the downstream target Thor\d4EBP and the feedback control target InR. Involved in negative regulation of the cell cycle, modulating cell growth and proliferation. In response to cellular stresses, such as nutrient deprivation or increased levels of reactive oxygen species, foxo is activated and inhibits growth through the action of target genes such as Thor. Foxo activated in the adult fat body can regulate lifespan in adults; an insulin peptide itself may function as one secondary messenger of insulin-regulated aging. Also regulates Lip4, homolog of human acid lipases, thereby acting as a key modulator of lipid metabolism by insulin signaling and integrates insulin responses to glucose and lipid homeostasis. The polypeptide is Forkhead box protein O (Drosophila yakuba (Fruit fly)).